The chain runs to 356 residues: Probable cytosolic iron-sulfur protein assembly protein 1 (356 aa).

WD repeat units lie at residues 34–73 (GHKR…IRAE), 89–128 (GHDS…DYEC), 134–173 (EHSQ…DWYC), 179–218 (AHSS…ECVE), 244–291 (HFSG…ATLR), and 319–356 (AHGS…RIWT).

This sequence belongs to the WD repeat CIA1 family.

Essential component of the cytosolic iron-sulfur (Fe/S) protein assembly machinery. Required for the maturation of extramitochondrial Fe/S proteins. The chain is Probable cytosolic iron-sulfur protein assembly protein 1 from Malassezia globosa (strain ATCC MYA-4612 / CBS 7966) (Dandruff-associated fungus).